We begin with the raw amino-acid sequence, 154 residues long: UPF0178 protein SSP2038 (154 aa).

This sequence belongs to the UPF0178 family.

This is UPF0178 protein SSP2038 from Staphylococcus saprophyticus subsp. saprophyticus (strain ATCC 15305 / DSM 20229 / NCIMB 8711 / NCTC 7292 / S-41).